The chain runs to 449 residues: Phosphoglucosamine mutase (449 aa).

Ser100 (phosphoserine intermediate) is an active-site residue. Positions 100, 241, 243, and 245 each coordinate Mg(2+). Ser100 carries the post-translational modification Phosphoserine.

Belongs to the phosphohexose mutase family. The cofactor is Mg(2+). Activated by phosphorylation.

The catalysed reaction is alpha-D-glucosamine 1-phosphate = D-glucosamine 6-phosphate. In terms of biological role, catalyzes the conversion of glucosamine-6-phosphate to glucosamine-1-phosphate. This Clostridium botulinum (strain ATCC 19397 / Type A) protein is Phosphoglucosamine mutase.